The chain runs to 164 residues: Peptidyl-prolyl cis-trans isomerase (164 aa).

Positions 7–163 (FFDLQANGEN…KKITIADCGQ (157 aa)) constitute a PPIase cyclophilin-type domain.

The protein belongs to the cyclophilin-type PPIase family. PPIase A subfamily.

It is found in the cytoplasm. It catalyses the reaction [protein]-peptidylproline (omega=180) = [protein]-peptidylproline (omega=0). Its activity is regulated as follows. Binds cyclosporin A (CsA). CsA mediates some of its effects via an inhibitory action on PPIase. In terms of biological role, PPIases accelerate the folding of proteins. It catalyzes the cis-trans isomerization of proline imidic peptide bonds in oligopeptides. The chain is Peptidyl-prolyl cis-trans isomerase from Hemicentrotus pulcherrimus (Sea urchin).